Reading from the N-terminus, the 89-residue chain is Large ribosomal subunit protein bL27 (89 aa).

The tract at residues 1–22 (MAHKKGTGSTRNGRDSNAQRLG) is disordered. A compositionally biased stretch (polar residues) spans 7-19 (TGSTRNGRDSNAQ).

The protein belongs to the bacterial ribosomal protein bL27 family.

This is Large ribosomal subunit protein bL27 from Cyanothece sp. (strain PCC 7425 / ATCC 29141).